Consider the following 487-residue polypeptide: N-succinylglutamate 5-semialdehyde dehydrogenase (487 aa).

Position 221–226 (221–226) interacts with NAD(+); it reads GSSDTG. Residues Glu-244 and Cys-278 contribute to the active site.

Belongs to the aldehyde dehydrogenase family. AstD subfamily.

The catalysed reaction is N-succinyl-L-glutamate 5-semialdehyde + NAD(+) + H2O = N-succinyl-L-glutamate + NADH + 2 H(+). It participates in amino-acid degradation; L-arginine degradation via AST pathway; L-glutamate and succinate from L-arginine: step 4/5. Catalyzes the NAD-dependent reduction of succinylglutamate semialdehyde into succinylglutamate. The sequence is that of N-succinylglutamate 5-semialdehyde dehydrogenase from Burkholderia ambifaria (strain MC40-6).